The following is a 397-amino-acid chain: Lymphoid enhancer-binding factor 1 (397 aa).

The interval 1-60 (MPQLSGGGGGGDPELCATDEMIPFKDEGDPQKEKIFAEISHPEEEGDLADIKSSLVNESE) is CTNNB1-binding. Lysine 25 is covalently cross-linked (Glycyl lysine isopeptide (Lys-Gly) (interchain with G-Cter in SUMO)). The segment at 59 to 102 (SEIIPASNGHEVVRQAPSSQEPYHDKAREHPDEGKHPDGGLYNK) is disordered. Basic and acidic residues predominate over residues 80–96 (PYHDKAREHPDEGKHPD). Position 130 is a phosphoserine (serine 130). Position 153 is a phosphothreonine; by NLK (threonine 153). A Phosphoserine; by NLK modification is found at serine 164. Disordered regions lie at residues 164–191 (SPGS…APEI) and 266–296 (VKQE…KRPH). Lysine 267 participates in a covalent cross-link: Glycyl lysine isopeptide (Lys-Gly) (interchain with G-Cter in SUMO). Over residues 267 to 294 (KQEHPHTDSDLMHVKPQHEQRKEQEPKR) the composition is skewed to basic and acidic residues. Residues 297 to 365 (IKKPLNAFML…LHMQLYPGWS (69 aa)) constitute a DNA-binding region (HMG box). Residues 367–397 (RDNYGKKKKRKREKLQESTSGTGPRMTAAYI) are disordered.

The protein belongs to the TCF/LEF family. Binds the armadillo repeat of CTNNB1 and forms a stable complex. Binds TLE1, ALYREF/THOC4, MDFI and MDFIC. Interacts with NLK. Interacts with EP300 and PIASG. Interacts with DAZAP2. In terms of processing, phosphorylated at Thr-153 and/or Ser-164 by NLK. Phosphorylation by NLK at these sites represses LEF1-mediated transcriptional activation of target genes of the canonical Wnt signaling pathway. As to expression, expressed in Vgamma1.1 and Vgamma2 gamma-delta T-cells, however not expressed in gamma-delta thymocytes fated for Il17a expression (at protein level). Expressed in alpha-beta T-cell lineages. Expressed in the thymus. Found in distinct epithelial cell compartments of the skin and is abundant in the hair-producing progenitors of the follicle.

The protein resides in the nucleus. Transcription factor that binds DNA in a sequence-specific manner. Participates in the Wnt signaling pathway. Activates transcription of target genes in the presence of CTNNB1 and EP300. PIASG antagonizes both Wnt-dependent and Wnt-independent activation by LEF1. TLE1, TLE2, TLE3 and TLE4 repress transactivation mediated by LEF1 and CTNNB1. Regulates T-cell receptor alpha enhancer function. Required for IL17A expressing gamma-delta T-cell maturation and development, via binding to regulator loci of BLK to modulate expression. Acts as a positive regulator of odontoblast differentiation during mesenchymal tooth germ formation, expression is repressed during the bell stage by MSX1-mediated inhibition of CTNNB1 signaling. May play a role in hair cell differentiation and follicle morphogenesis. In Mus musculus (Mouse), this protein is Lymphoid enhancer-binding factor 1.